Here is a 265-residue protein sequence, read N- to C-terminus: MDYINAAILGVIEGITEFLPISSTGHLIIAEQWLGHRSDMFNIVIQAGAILAVTIIYWRRLVDLVLGWRDPVNRDYAAKLIVAFLITAILGLVVKKLGFELPETATPIAWALIIGGIWMIFAEWAAARRPPHKEITWLVAILVGIAQIVAGVFPGTSRSGATIFVAMLAGTGNRASATEFAFLVGIPTMYAASAYELLKTFRDGGAAGEDWTALGIAFVVSTVVAFIAVKWLLAYIRSNRFTLFAIYRIILGVLLLGMAATGLIA.

7 helical membrane-spanning segments follow: residues 38–58, 80–100, 107–127, 135–155, 178–198, 216–236, and 244–264; these read SDMFNIVIQAGAILAVTIIYW, LIVAFLITAILGLVVKKLGFE, PIAWALIIGGIWMIFAEWAAA, ITWLVAILVGIAQIVAGVFPG, TEFAFLVGIPTMYAASAYELL, IAFVVSTVVAFIAVKWLLAYI, and FAIYRIILGVLLLGMAATGLI.

Belongs to the UppP family.

It is found in the cell inner membrane. It catalyses the reaction di-trans,octa-cis-undecaprenyl diphosphate + H2O = di-trans,octa-cis-undecaprenyl phosphate + phosphate + H(+). Catalyzes the dephosphorylation of undecaprenyl diphosphate (UPP). Confers resistance to bacitracin. This is Undecaprenyl-diphosphatase from Rhizobium johnstonii (strain DSM 114642 / LMG 32736 / 3841) (Rhizobium leguminosarum bv. viciae).